The following is an 89-amino-acid chain: Small ribosomal subunit protein uS15 (89 aa).

Belongs to the universal ribosomal protein uS15 family. Part of the 30S ribosomal subunit. Forms a bridge to the 50S subunit in the 70S ribosome, contacting the 23S rRNA.

Functionally, one of the primary rRNA binding proteins, it binds directly to 16S rRNA where it helps nucleate assembly of the platform of the 30S subunit by binding and bridging several RNA helices of the 16S rRNA. In terms of biological role, forms an intersubunit bridge (bridge B4) with the 23S rRNA of the 50S subunit in the ribosome. The polypeptide is Small ribosomal subunit protein uS15 (Acinetobacter baylyi (strain ATCC 33305 / BD413 / ADP1)).